The sequence spans 375 residues: Alcohol dehydrogenase 1 (375 aa).

The residue at position 2 (serine 2) is an N-acetylserine. Residues cysteine 47, histidine 68, cysteine 98, cysteine 101, cysteine 104, cysteine 112, and cysteine 175 each coordinate Zn(2+). Residues 200-205 (GLGGVG), aspartate 224, and lysine 229 each bind NAD(+). Lysine 234 is modified (N6-succinyllysine). 293–295 (VGV) is a binding site for NAD(+). Residue lysine 340 is modified to N6-succinyllysine. Position 370 (arginine 370) interacts with NAD(+).

The protein belongs to the zinc-containing alcohol dehydrogenase family. Class-I subfamily. In terms of assembly, dimer of identical or non-identical chains of three types (A, B, C), which are coded by 3 separate genes at different loci. Zn(2+) is required as a cofactor. As to expression, expressed at high levels in the liver, small intestine and eye, at moderate levels in kidney, ovary and uterus, and at low levels in the spinal cord, thymus, heart, stomach mucosa, skin and testis.

The protein localises to the cytoplasm. The catalysed reaction is a primary alcohol + NAD(+) = an aldehyde + NADH + H(+). It carries out the reaction a secondary alcohol + NAD(+) = a ketone + NADH + H(+). This is Alcohol dehydrogenase 1 (Adh1) from Mus musculus (Mouse).